The sequence spans 437 residues: Mannan endo-1,4-beta-mannosidase A (437 aa).

The first 19 residues, 1–19 (MMMLSKSLLSAATAASALA), serve as a signal peptide directing secretion. A propeptide spanning residues 20 to 27 (AVLQPVPR) is cleaved from the precursor. Positions 28–376 (ASSFVTISGT…VDAINGGTTT (349 aa)) are catalytic. Cysteine 53 and cysteine 56 are disulfide-bonded. N-linked (GlcNAc...) asparagine glycosylation is found at asparagine 157 and asparagine 184. The Proton donor/acceptor role is filled by glutamate 196. Residue 196 to 198 (EPR) coordinates substrate. Cysteines 199 and 202 form a disulfide. Residues glutamate 232 and tryptophan 274 each coordinate substrate. Residue asparagine 277 is glycosylated (N-linked (GlcNAc...) asparagine). Cysteine 292 and cysteine 299 are oxidised to a cystine. Catalysis depends on glutamate 303, which acts as the Nucleophile. Cysteine 311 and cysteine 361 are joined by a disulfide. The N-linked (GlcNAc...) asparagine glycan is linked to asparagine 355. The interval 372-399 (GGTTTPPPVSSTTTTSSRTSSTPPPPGG) is disordered. The tract at residues 377-399 (PPPVSSTTTTSSRTSSTPPPPGG) is linker. Positions 381-392 (SSTTTTSSRTSS) are enriched in low complexity. Residues 400–435 (SCSPLYGQCGGSGYTGPTCCAQGTCIYSNYWYSQCL) enclose the CBM1 domain.

Belongs to the glycosyl hydrolase 5 (cellulase A) family. Monomer.

The protein localises to the secreted. The catalysed reaction is Random hydrolysis of (1-&gt;4)-beta-D-mannosidic linkages in mannans, galactomannans and glucomannans.. In terms of biological role, endo-1,4-mannanase that catalyzes the random hydrolysis of (1-&gt;4)-beta-D-mannosidic linkages in mannans and heteromannans. It is a crucial enzyme for depolymerization of seed galactomannans and wood galactoglucomannans. Active against locust bean gum and ivory nut mannan, releasing mainly tri- and disaccharides. Also has transglycosylation activity. Transglycosylation of two mannotrioses into a mannohexaose is the major transglycosylation route. The chain is Mannan endo-1,4-beta-mannosidase A from Hypocrea jecorina (strain ATCC 56765 / BCRC 32924 / NRRL 11460 / Rut C-30) (Trichoderma reesei).